The primary structure comprises 864 residues: Alanine--tRNA ligase (864 aa).

Residues histidine 553, histidine 557, cysteine 655, and histidine 659 each contribute to the Zn(2+) site. Residues 828-847 (VGGKGGGRPDMAQAGGKDPS) form a disordered region.

It belongs to the class-II aminoacyl-tRNA synthetase family. Zn(2+) serves as cofactor.

It is found in the cytoplasm. It carries out the reaction tRNA(Ala) + L-alanine + ATP = L-alanyl-tRNA(Ala) + AMP + diphosphate. Catalyzes the attachment of alanine to tRNA(Ala) in a two-step reaction: alanine is first activated by ATP to form Ala-AMP and then transferred to the acceptor end of tRNA(Ala). Also edits incorrectly charged Ser-tRNA(Ala) and Gly-tRNA(Ala) via its editing domain. This is Alanine--tRNA ligase from Hydrogenovibrio crunogenus (strain DSM 25203 / XCL-2) (Thiomicrospira crunogena).